The primary structure comprises 99 residues: Progonadoliberin-1 (99 aa).

The first 26 residues, 1–26, serve as a signal peptide directing secretion; it reads MAAQTFALRLLLVGTLLGTLLGQGCC. The residue at position 27 (Q27) is a Pyrrolidone carboxylic acid. G36 bears the Glycine amide mark.

It belongs to the GnRH family.

It is found in the secreted. Its function is as follows. Stimulates the secretion of gonadotropins. The polypeptide is Progonadoliberin-1 (gnrh1) (Dicentrarchus labrax (European seabass)).